The following is an 811-amino-acid chain: Protein MEI2-like 5 (811 aa).

2 RRM domains span residues 193–266 and 278–351; these read RTLF…YSIP and GTLV…PSRP. The tract at residues 371–397 is disordered; the sequence is TKHNSFQIGSPSANSPPSLWSQLGSPT. Polar residues predominate over residues 374 to 397; sequence NSFQIGSPSANSPPSLWSQLGSPT.

Its function is as follows. Probable RNA-binding protein that may play a role in growth regulation. The polypeptide is Protein MEI2-like 5 (ML5) (Oryza sativa subsp. japonica (Rice)).